We begin with the raw amino-acid sequence, 447 residues long: Phosphoglucosamine mutase (447 aa).

The active-site Phosphoserine intermediate is serine 104. Mg(2+) contacts are provided by serine 104, aspartate 243, aspartate 245, and aspartate 247. Position 104 is a phosphoserine (serine 104).

Belongs to the phosphohexose mutase family. The cofactor is Mg(2+). Activated by phosphorylation.

It carries out the reaction alpha-D-glucosamine 1-phosphate = D-glucosamine 6-phosphate. Its function is as follows. Catalyzes the conversion of glucosamine-6-phosphate to glucosamine-1-phosphate. In Corynebacterium glutamicum (strain ATCC 13032 / DSM 20300 / JCM 1318 / BCRC 11384 / CCUG 27702 / LMG 3730 / NBRC 12168 / NCIMB 10025 / NRRL B-2784 / 534), this protein is Phosphoglucosamine mutase.